We begin with the raw amino-acid sequence, 226 residues long: ATP synthase subunit a (226 aa).

The next 6 membrane-spanning stretches (helical) occupy residues 17–37, 79–99, 105–125, 134–154, 176–196, and 199–219; these read FSYF…AMMA, LVAT…IPGF, SLNL…FEGI, FAHF…IEIV, LFLM…AYVL, and FMAF…LAGA.

The protein belongs to the ATPase A chain family. In terms of assembly, F-type ATPases have 2 components, CF(1) - the catalytic core - and CF(0) - the membrane proton channel. CF(1) has five subunits: alpha(3), beta(3), gamma(1), delta(1), epsilon(1). CF(0) has three main subunits: a(1), b(2) and c(9-12). The alpha and beta chains form an alternating ring which encloses part of the gamma chain. CF(1) is attached to CF(0) by a central stalk formed by the gamma and epsilon chains, while a peripheral stalk is formed by the delta and b chains.

The protein localises to the cell inner membrane. Key component of the proton channel; it plays a direct role in the translocation of protons across the membrane. The protein is ATP synthase subunit a of Campylobacter jejuni subsp. jejuni serotype O:23/36 (strain 81-176).